We begin with the raw amino-acid sequence, 620 residues long: MAEARTSLSAHCRGPLATGLHPDLDLPGRSLATPAPSCYLLGSEPSSGLGLQPETHLPEGSLKRCCVLGLPPTSPASSSPCASSDVTSIIRSSQTSLVTCVNGLRSPPLTGDLGGPSKRARPGPASTDSHEGSLQLEACRKASFLKQEPADEFSELFGPHQQGLPPPYPLSQLPPGPSLGGLGLGLAGRVVAGRQACRWVDCCAAYEQQEELVRHIEKSHIDQRKGEDFTCFWAGCVRRYKPFNARYKLLIHMRVHSGEKPNKCMFEGCSKAFSRLENLKIHLRSHTGEKPYLCQHPGCQKAFSNSSDRAKHQRTHLDTKPYACQIPGCSKRYTDPSSLRKHVKAHSAKEQQVRKKLHAGPDTEADVLTECLVLQQLHTSTQLAASDGKGGCGLGQELLPGVYPGSITPHNGLASGLLPPAHDVPSRHHPLDATTSSHHHLSPLPMAESTRDGLGPGLLSPIVSPLKGLGPPPLPPSSQSHSPGGQPFPTLPSKPSYPPFQSPPPPPLPSPQGYQGSFHSIQSCFPYGDCYRMAEPAAGGDGLVGETHGFNPLRPNGYHSLSTPLPATGYEALAEASCPTALPQQPSEDVVSSGPEDCGFFPNGAFDHCLGHIPSIYTDT.

The disordered stretch occupies residues 108–132 (PLTGDLGGPSKRARPGPASTDSHEG). The C2H2-type 1 zinc-finger motif lies at 195-220 (QACRWVDCCAAYEQQEELVRHIEKSH). The segment at 229–256 (FTCFWAGCVRRYKPFNARYKLLIHMRVH) adopts a C2H2-type 2; atypical zinc-finger fold. 3 C2H2-type zinc fingers span residues 262–286 (NKCM…LRSH), 292–316 (YLCQ…QRTH), and 322–346 (YACQ…VKAH). The short motif at 340–356 (RKHVKAHSAKEQQVRKK) is the Bipartite nuclear localization signal element. The disordered stretch occupies residues 414 to 515 (ASGLLPPAHD…PPLPSPQGYQ (102 aa)). Positions 477 to 488 (SSQSHSPGGQPF) are enriched in low complexity. Positions 489–510 (PTLPSKPSYPPFQSPPPPPLPS) are enriched in pro residues.

This sequence belongs to the GLI C2H2-type zinc-finger protein family. As to quaternary structure, interacts with KLF4. Interacts with POU5F1 and/or POU5F1B. Interacts with SOX2.

It localises to the nucleus. Functionally, acts both as a repressor and an activator of transcription. Binds to the consensus sequence 5'-GACCACCCAC-3'. By controlling the expression of genes involved in cell differentiation inhibits the lineage commitment of multipotent cells. Prevents, for instance, the differentiation of multipotent mesenchymal cells into adipocyte and osteoblast. This is Zinc finger protein GLIS1 from Homo sapiens (Human).